The primary structure comprises 144 residues: 3-hydroxyacyl-[acyl-carrier-protein] dehydratase FabZ (144 aa).

His-49 is an active-site residue.

Belongs to the thioester dehydratase family. FabZ subfamily.

The protein localises to the cytoplasm. It carries out the reaction a (3R)-hydroxyacyl-[ACP] = a (2E)-enoyl-[ACP] + H2O. Functionally, involved in unsaturated fatty acids biosynthesis. Catalyzes the dehydration of short chain beta-hydroxyacyl-ACPs and long chain saturated and unsaturated beta-hydroxyacyl-ACPs. This chain is 3-hydroxyacyl-[acyl-carrier-protein] dehydratase FabZ, found in Clostridium kluyveri (strain NBRC 12016).